A 452-amino-acid chain; its full sequence is Gastrin/cholecystokinin type B receptor (452 aa).

The segment at 1–21 (MELLKLNRSVQGPGPGSGSSL) is disordered. Residues 1-57 (MELLKLNRSVQGPGPGSGSSLCRPGVSLLNSSSAGNLSCDPPRIRGTGTRELEMAIR) are Extracellular-facing. N7, N30, and N36 each carry an N-linked (GlcNAc...) asparagine glycan. Residues 58 to 79 (ITLYAVIFLMSVGGNVLIIVVL) traverse the membrane as a helical segment. At 80-87 (GLSRRLRT) the chain is on the cytoplasmic side. The helical transmembrane segment at 88–109 (VTNAFLLSLAVSDLLLAVACMP) threads the bilayer. The Extracellular portion of the chain corresponds to 110–131 (FTLLPNLMGTFIFGTVICKAIS). A disulfide bond links C127 and C205. The helical transmembrane segment at 132-150 (YLMGVSVSVSTLNLVAIAL) threads the bilayer. The Cytoplasmic segment spans residues 151–170 (ERYSAICRPLQARVWQTRSH). A helical transmembrane segment spans residues 171-189 (AARVILATWLLSGLLMVPY). Residues 190-219 (PVYTMVQPVGPRVLQCMHRWPSARVQQTWS) are Extracellular-facing. Residues 220–242 (VLLLLLLFFIPGVVIAVAYGLIS) traverse the membrane as a helical segment. The Cytoplasmic segment spans residues 243 to 338 (RELYLGLHFD…KLLAKKRVVR (96 aa)). The segment at 257–286 (SETQSRARNQGGLPGGAAPGPVHQNGGCRP) is disordered. A helical membrane pass occupies residues 339 to 360 (MLLVIVLLFFLCWLPVYSVNTW). At 361–378 (RAFDGPGAQRALSGAPIS) the chain is on the extracellular side. A helical transmembrane segment spans residues 379-399 (FIHLLSYVSACVNPLVYCFMH). The Cytoplasmic portion of the chain corresponds to 400–452 (RRFRQACLDTCARCCPRPPRARPQPLPDEDPPTPSIASLSRLSYTTISTLGPG). C413 is lipidated: S-palmitoyl cysteine. Positions 421–452 (RPQPLPDEDPPTPSIASLSRLSYTTISTLGPG) are disordered. Residues 434–452 (SIASLSRLSYTTISTLGPG) are compositionally biased toward polar residues.

This sequence belongs to the G-protein coupled receptor 1 family. Parietal cells, pancreas, brain and various neoplastic tissues.

Its subcellular location is the cell membrane. Its function is as follows. Receptor for gastrin and cholecystokinin. The CCK-B receptors occur throughout the central nervous system where they modulate anxiety, analgesia, arousal, and neuroleptic activity. This receptor mediates its action by association with G proteins that activate a phosphatidylinositol-calcium second messenger system. The polypeptide is Gastrin/cholecystokinin type B receptor (Cckbr) (Rattus norvegicus (Rat)).